Consider the following 1065-residue polypeptide: Cellulose synthase A catalytic subunit 3 [UDP-forming] (1065 aa).

The Cytoplasmic portion of the chain corresponds to 1–260 (MESEGETAGK…PSSRINPYRM (260 aa)). The residue at position 3 (Ser-3) is a Phosphoserine. Residues Cys-20, Cys-23, Cys-39, Cys-42, Cys-47, Cys-50, Cys-62, and Cys-65 each contribute to the Zn(2+) site. An RING-type; degenerate zinc finger spans residues 20 to 66 (CQICSDNVGKTVDGDRFVACDICSFPVCRPCYEYERKDGNQSCPQCK). Residues Ser-151, Ser-211, and Ser-216 each carry the phosphoserine modification. The chain crosses the membrane as a helical span at residues 261-281 (VIMLRLVILCLFLHYRITNPV). The Extracellular portion of the chain corresponds to 282–283 (PN). The chain crosses the membrane as a helical span at residues 284–304 (AFALWLVSVICEIWFALSWIL). The Cytoplasmic portion of the chain corresponds to 305 to 842 (DQFPKWFPVN…LERFAYVNTT (538 aa)). Residues Ser-343, Lys-349, Glu-350, and Asp-379 each contribute to the UDP-alpha-D-glucose site. Asp-379 is an active-site residue. Residues 433–457 (VKDRRAMKREYEEFKIRINALVSKA) are a coiled coil. Residue Lys-520 participates in UDP-alpha-D-glucose binding. Mn(2+) is bound by residues Lys-521 and Asp-545. The disordered stretch occupies residues 643–672 (SKLCGGSRKKNSKAKKESDKKKSGRHTDST). Positions 656–670 (AKKESDKKKSGRHTD) are enriched in basic and acidic residues. Residue Asp-765 is part of the active site. A helical transmembrane segment spans residues 843–863 (IYPITSIPLLMYCTLPAVCLF). The Extracellular portion of the chain corresponds to 864–874 (TNQFIIPQISN). Residues 875–895 (IASIWFLSLFLSIFATGILEM) traverse the membrane as a helical segment. Topologically, residues 896-910 (RWSGVGIDEWWRNEQ) are cytoplasmic. A helical transmembrane segment spans residues 911 to 931 (FWVIGGVSAHLFAVFQGILKV). Over 932 to 961 (LAGIDTNFTVTSKASDEDGDFAELYLFKWT) the chain is Extracellular. An N-linked (GlcNAc...) asparagine glycan is attached at Asn-938. Residues 962 to 982 (TLLIPPTTLLIVNLVGVVAGV) traverse the membrane as a helical segment. Residues 983–993 (SYAINSGYQSW) are Cytoplasmic-facing. Residues 994 to 1014 (GPLFGKLFFAFWVIVHLYPFL) form a helical membrane-spanning segment. Residues 1015 to 1023 (KGLMGRQNR) lie on the Extracellular side of the membrane. Residues 1024–1044 (TPTIVVVWSVLLASIFSLLWV) traverse the membrane as a helical segment. Over 1045-1065 (RIDPFTSRVTGPDILECGINC) the chain is Cytoplasmic.

It belongs to the glycosyltransferase 2 family. Plant cellulose synthase subfamily. In terms of assembly, homodimer. Interacts with CESA1 and CESA6. Interacts with STL1 and STL2, but not with GOT1. Binds to CSI1 and CSI3. Interacts with PAT24/TIP1. It depends on Zn(2+) as a cofactor. Requires Mn(2+) as cofactor. Palmitoylated, in part by PAT24/TIP1. Expressed in young plants, flowers and roots, and to a lower extent in leaves and stems. Localized in all cells except meristematic cells. Accumulates particularly in root caps, root hairs, epidermal layer, midveins of leaves and anthers. Not present in old tissues.

Its subcellular location is the cell membrane. It is found in the golgi apparatus membrane. It catalyses the reaction [(1-&gt;4)-beta-D-glucosyl](n) + UDP-alpha-D-glucose = [(1-&gt;4)-beta-D-glucosyl](n+1) + UDP + H(+). It participates in glycan metabolism; plant cellulose biosynthesis. Catalytic subunit of cellulose synthase terminal complexes ('rosettes'), required for beta-1,4-glucan microfibril crystallization, a major mechanism of the cell wall formation. Involved in the primary cell wall formation, especially in roots. This chain is Cellulose synthase A catalytic subunit 3 [UDP-forming], found in Arabidopsis thaliana (Mouse-ear cress).